The following is a 275-amino-acid chain: DNA polymerase II subunit B4 (275 aa).

The DNA-binding element occupies 11–17 (LPLAIVR). A compositionally biased stretch (low complexity) spans 112 to 122 (ASYPAGGAALK). The tract at residues 112 to 275 (ASYPAGGAAL…EEVESDEEDE (164 aa)) is disordered. The Nuclear localization signal motif lies at 135–142 (KKRKQEEP). Residues 151–161 (SKIDEETKRND) are compositionally biased toward basic and acidic residues. Residues 152 to 179 (KIDEETKRNDEETENDNTEEENGNDEED) are a coiled coil. Acidic residues-rich tracts occupy residues 162–237 (EETE…EESG) and 266–275 (EEVESDEEDE).

It belongs to the NFYB/HAP3 subunit family. In terms of assembly, heterotrimeric transcription factor composed of three components, NF-YA, NF-YB and NF-YC. NF-YB and NF-YC must interact and dimerize for NF-YA association and DNA binding. Binds directly with DPB3-1.

The protein localises to the nucleus. Component of the NF-Y/HAP transcription factor complex. The NF-Y complex stimulates the transcription of various genes by recognizing and binding to a CCAAT motif in promoters. The sequence is that of DNA polymerase II subunit B4 from Arabidopsis thaliana (Mouse-ear cress).